A 186-amino-acid chain; its full sequence is Alpha/beta-gliadin clone PTO-A10 (186 aa).

The segment at 1-20 (PQPQPQYSQPQQPISQQQQQ) is disordered.

It belongs to the gliadin/glutenin family. In terms of processing, substrate of transglutaminase.

Gliadin is the major seed storage protein in wheat. The protein is Alpha/beta-gliadin clone PTO-A10 of Triticum aestivum (Wheat).